We begin with the raw amino-acid sequence, 66 residues long: Large ribosomal subunit protein bL35 (66 aa).

Basic residues predominate over residues 1 to 26 (MPKMKTHRGAAKRVKRTGSGKLKRSR). Residues 1–49 (MPKMKTHRGAAKRVKRTGSGKLKRSRAFTSHLFANKSTKQKRKLRKASL) form a disordered region.

It belongs to the bacterial ribosomal protein bL35 family.

This is Large ribosomal subunit protein bL35 from Staphylococcus saprophyticus subsp. saprophyticus (strain ATCC 15305 / DSM 20229 / NCIMB 8711 / NCTC 7292 / S-41).